The chain runs to 326 residues: Cathepsin L-like proteinase (326 aa).

Residues 1 to 15 (MRLFILAVLTVGVLG) form the signal peptide. The propeptide at 16 to 106 (SNDDLWHQWK…HGVPYEANNR (91 aa)) is activation peptide. Residue P109 is modified to 3-hydroxyproline; partial. Disulfide bonds link C129/C172, C163/C204, and C262/C311. C132 is a catalytic residue. P196 is modified (3-hydroxyproline; partial). Catalysis depends on residues H269 and N289.

It belongs to the peptidase C1 family. As to quaternary structure, monomer. Contains cysteine residues involved in intramolecular disulfide bonding.

The protein resides in the secreted. With respect to regulation, strongly inhibited by Antipain, E64 and Leupeptin, and weakly inhibited by iodoacetic acid (IAA) and phenylmethylsulfonyl fluoride (PMSF). Requires the presence of dithiothreitol (DTT) for activity. Thiol protease. Probably involved in interaction with host tissues. Displays a similar activity to that of papain. Has high activity on Z-Phe-Arg-NHMec, but no activity on Z-Arg-NHMec. The polypeptide is Cathepsin L-like proteinase (Fasciola hepatica (Liver fluke)).